Reading from the N-terminus, the 258-residue chain is MMFMVKIITRKVKDIEPLENALLIEGLPGIGHVGRLAAEHLVHEFKGEKFLELFCYDFPPQVLVKDDGTIEYMCAEFYAIREPKPMIVVLGNTQALSPIGQYHLAEEIVKIGIEYGANFVYTLGGFGVGKLCEEVKVYGATTSKELAKKLKEHDILFRTDGGGIVGAAGLMLMFADLNGIPGICLMGETPGYLIDPNAAKAVLEKFCKLENIEINMEELEKRAKGMEQFIEKIKKFEEEMLKAAQAKPPSEEDLRYIG.

The helical transmembrane segment at 163 to 187 (GIVGAAGLMLMFADLNGIPGICLMG) threads the bilayer.

The protein resides in the membrane. This is an uncharacterized protein from Methanocaldococcus jannaschii (strain ATCC 43067 / DSM 2661 / JAL-1 / JCM 10045 / NBRC 100440) (Methanococcus jannaschii).